The chain runs to 106 residues: UPF0145 protein Daci_3728 (106 aa).

The protein belongs to the UPF0145 family.

This chain is UPF0145 protein Daci_3728, found in Delftia acidovorans (strain DSM 14801 / SPH-1).